The chain runs to 236 residues: uncharacterized protein (236 aa).

A disordered region spans residues 1 to 29; the sequence is MNNEKNKQDRENLNRQDERKSSEIKSERK.

This is an uncharacterized protein from Staphylococcus aureus.